The chain runs to 112 residues: UPF0342 protein SP_1372 (112 aa).

This sequence belongs to the UPF0342 family.

This Streptococcus pneumoniae serotype 4 (strain ATCC BAA-334 / TIGR4) protein is UPF0342 protein SP_1372.